The sequence spans 118 residues: uncharacterized protein (118 aa).

The disordered stretch occupies residues 98–118 (KGKGNEGREEAEEPLEEPEEG). The span at 106 to 118 (EEAEEPLEEPEEG) shows a compositional bias: acidic residues.

Belongs to the UPF0440 family.

This is an uncharacterized protein from Pyrococcus abyssi (strain GE5 / Orsay).